The following is a 238-amino-acid chain: ATP-dependent Clp protease proteolytic subunit 4 (238 aa).

Serine 113 functions as the Nucleophile in the catalytic mechanism. Histidine 138 is a catalytic residue.

The protein belongs to the peptidase S14 family. Fourteen ClpP subunits assemble into 2 heptameric rings which stack back to back to give a disk-like structure with a central cavity, resembling the structure of eukaryotic proteasomes.

The protein localises to the cytoplasm. The catalysed reaction is Hydrolysis of proteins to small peptides in the presence of ATP and magnesium. alpha-casein is the usual test substrate. In the absence of ATP, only oligopeptides shorter than five residues are hydrolyzed (such as succinyl-Leu-Tyr-|-NHMec, and Leu-Tyr-Leu-|-Tyr-Trp, in which cleavage of the -Tyr-|-Leu- and -Tyr-|-Trp bonds also occurs).. In terms of biological role, cleaves peptides in various proteins in a process that requires ATP hydrolysis. Has a chymotrypsin-like activity. Plays a major role in the degradation of misfolded proteins. This Frankia casuarinae (strain DSM 45818 / CECT 9043 / HFP020203 / CcI3) protein is ATP-dependent Clp protease proteolytic subunit 4.